Consider the following 388-residue polypeptide: Alcohol dehydrogenase-like 1 (388 aa).

The Zn(2+) site is built by Cys53, Thr55, His76, Cys106, Cys109, Cys112, Cys120, and Cys185. An alcohol-binding residues include Thr55 and His76. An NAD(+)-binding site is contributed by Thr55. NAD(+) contacts are provided by residues 210 to 215, Asp234, Lys239, 304 to 306, Phe331, and Arg381; these read GLGAVG and LGM.

It belongs to the zinc-containing alcohol dehydrogenase family. Class-III subfamily. As to quaternary structure, homodimer. The cofactor is Zn(2+).

Its subcellular location is the cytoplasm. The catalysed reaction is a primary alcohol + NAD(+) = an aldehyde + NADH + H(+). It catalyses the reaction a secondary alcohol + NAD(+) = a ketone + NADH + H(+). This is Alcohol dehydrogenase-like 1 from Arabidopsis thaliana (Mouse-ear cress).